A 123-amino-acid chain; its full sequence is MPRATLPAEARLHRPSEFAAALKGRRLARGAFFIVSASPCAPADDQPARARLGLVIAKRFAARAVTRNTLKRVIREAFRARRLALPAQDYVVRLHSKLTPASLTALKRSARAEVDAHFTRIAR.

The protein belongs to the RnpA family. As to quaternary structure, consists of a catalytic RNA component (M1 or rnpB) and a protein subunit.

The enzyme catalyses Endonucleolytic cleavage of RNA, removing 5'-extranucleotides from tRNA precursor.. In terms of biological role, RNaseP catalyzes the removal of the 5'-leader sequence from pre-tRNA to produce the mature 5'-terminus. It can also cleave other RNA substrates such as 4.5S RNA. The protein component plays an auxiliary but essential role in vivo by binding to the 5'-leader sequence and broadening the substrate specificity of the ribozyme. The protein is Ribonuclease P protein component of Bordetella bronchiseptica (strain ATCC BAA-588 / NCTC 13252 / RB50) (Alcaligenes bronchisepticus).